The sequence spans 311 residues: Tricarboxylate transport protein, mitochondrial (311 aa).

A propeptide spans 1–13 (MAAARAPRALTSA) (removed in mature form). Residues 1–15 (MAAARAPRALTSASP) show a composition bias toward low complexity. The tract at residues 1-22 (MAAARAPRALTSASPGSGKAKL) is disordered. Solcar repeat units lie at residues 23-111 (THPG…LSNH), 122-208 (TRGL…LRNW), and 218-303 (MNPL…VVKL). The next 3 membrane-spanning stretches (helical) occupy residues 29 to 46 (ILAG…TFPT), 86 to 105 (GLSS…FGTF), and 129 to 143 (LGAG…VCPM). Serine 156 carries the phosphoserine modification. The next 3 helical transmembrane spans lie at 183-202 (GLTA…FFVM), 224-241 (GVFG…NTPL), and 278-297 (GTVP…FIIY).

It belongs to the mitochondrial carrier (TC 2.A.29) family. Post-translationally, possesses a short cleavable presequence, which, however, is found to be dispensable both for targeting to mitochondria and insertion into the inner membrane. However, the presequence is required to keep SLC25A1 in a soluble state and thus in an import-competent state. Mature SLC25A1 lacking the presequence is prone to aggregation.

It localises to the mitochondrion inner membrane. The protein resides in the mitochondrion membrane. It carries out the reaction (S)-malate(in) + citrate(out) = (S)-malate(out) + citrate(in). The enzyme catalyses D-threo-isocitrate(in) + citrate(out) = D-threo-isocitrate(out) + citrate(in). The catalysed reaction is citrate(out) + succinate(in) = citrate(in) + succinate(out). It catalyses the reaction phosphoenolpyruvate(in) + citrate(out) = phosphoenolpyruvate(out) + citrate(in). It carries out the reaction cis-aconitate(in) + citrate(out) = cis-aconitate(out) + citrate(in). The enzyme catalyses trans-aconitate(in) + citrate(out) = trans-aconitate(out) + citrate(in). The catalysed reaction is maleate(in) + citrate(out) = maleate(out) + citrate(in). In terms of biological role, mitochondrial electroneutral antiporter that exports citrate from the mitochondria into the cytosol in exchange for malate. Also able to mediate the exchange of citrate for isocitrate, phosphoenolpyruvate, cis-aconitate and to a lesser extent trans-aconitate, maleate and succinate. In the cytoplasm, citrate plays important roles in fatty acid and sterol synthesis, regulation of glycolysis, protein acetylation, and other physiopathological processes. In Bos taurus (Bovine), this protein is Tricarboxylate transport protein, mitochondrial (SLC25A1).